The sequence spans 344 residues: Heat-inducible transcription repressor HrcA (344 aa).

The protein belongs to the HrcA family.

In terms of biological role, negative regulator of class I heat shock genes (grpE-dnaK-dnaJ and groELS operons). Prevents heat-shock induction of these operons. This chain is Heat-inducible transcription repressor HrcA, found in Streptococcus pneumoniae (strain 70585).